A 394-amino-acid polypeptide reads, in one-letter code: Elongation factor Tu 1 (394 aa).

The 195-residue stretch at 10 to 204 folds into the tr-type G domain; sequence KPHVNVGTIG…ALDSYIPEPE (195 aa). Residues 19–26 are G1; it reads GHVDHGKT. Residue 19-26 participates in GTP binding; the sequence is GHVDHGKT. T26 is a Mg(2+) binding site. A G2 region spans residues 60–64; that stretch reads GITIS. The tract at residues 81 to 84 is G3; it reads DCPG. Residues 81-85 and 136-139 contribute to the GTP site; these read DCPGH and NKCD. The G4 stretch occupies residues 136-139; sequence NKCD. The segment at 174-176 is G5; that stretch reads SAL.

This sequence belongs to the TRAFAC class translation factor GTPase superfamily. Classic translation factor GTPase family. EF-Tu/EF-1A subfamily. In terms of assembly, monomer.

It localises to the cytoplasm. The catalysed reaction is GTP + H2O = GDP + phosphate + H(+). Its function is as follows. GTP hydrolase that promotes the GTP-dependent binding of aminoacyl-tRNA to the A-site of ribosomes during protein biosynthesis. The chain is Elongation factor Tu 1 from Vibrio vulnificus (strain YJ016).